Reading from the N-terminus, the 306-residue chain is D-aminoacyl-tRNA deacylase (306 aa).

This sequence belongs to the DtdA deacylase family. In terms of assembly, monomer. The cofactor is Zn(2+).

The catalysed reaction is a D-aminoacyl-tRNA + H2O = a tRNA + a D-alpha-amino acid + H(+). It catalyses the reaction glycyl-tRNA(Ala) + H2O = tRNA(Ala) + glycine + H(+). In terms of biological role, D-aminoacyl-tRNA deacylase with broad substrate specificity. By recycling D-aminoacyl-tRNA to D-amino acids and free tRNA molecules, this enzyme counteracts the toxicity associated with the formation of D-aminoacyl-tRNA entities in vivo. In Methanosarcina barkeri (strain Fusaro / DSM 804), this protein is D-aminoacyl-tRNA deacylase.